Here is a 629-residue protein sequence, read N- to C-terminus: tRNA uridine 5-carboxymethylaminomethyl modification enzyme MnmG (629 aa).

FAD contacts are provided by residues 13 to 18, Val125, and Ser180; that span reads GGGHAG. 273–287 is an NAD(+) binding site; that stretch reads GPRYCPSIEDKVMRF. Position 370 (Gln370) interacts with FAD.

It belongs to the MnmG family. As to quaternary structure, homodimer. Heterotetramer of two MnmE and two MnmG subunits. Requires FAD as cofactor.

It localises to the cytoplasm. Its function is as follows. NAD-binding protein involved in the addition of a carboxymethylaminomethyl (cmnm) group at the wobble position (U34) of certain tRNAs, forming tRNA-cmnm(5)s(2)U34. The protein is tRNA uridine 5-carboxymethylaminomethyl modification enzyme MnmG of Salmonella schwarzengrund (strain CVM19633).